The chain runs to 332 residues: Ribosomal RNA small subunit methyltransferase C (332 aa).

Belongs to the methyltransferase superfamily. RsmC family. Monomer.

The protein localises to the cytoplasm. The enzyme catalyses guanosine(1207) in 16S rRNA + S-adenosyl-L-methionine = N(2)-methylguanosine(1207) in 16S rRNA + S-adenosyl-L-homocysteine + H(+). Its function is as follows. Specifically methylates the guanine in position 1207 of 16S rRNA in the 30S particle. The sequence is that of Ribosomal RNA small subunit methyltransferase C from Pseudomonas entomophila (strain L48).